The following is a 217-amino-acid chain: RNA chaperone ProQ (217 aa).

Residues 105 to 166 (EAKARVQAQR…PREEQHTPVS (62 aa)) are disordered. Positions 121–131 (KRERKPRPTTP) are enriched in basic residues. Over residues 132-162 (RRKEGAERKPRAQKPVEKAPKTVKAPREEQH) the composition is skewed to basic and acidic residues.

This sequence belongs to the ProQ family.

It localises to the cytoplasm. In terms of biological role, RNA chaperone with significant RNA binding, RNA strand exchange and RNA duplexing activities. May regulate ProP activity through an RNA-based, post-transcriptional mechanism. The chain is RNA chaperone ProQ from Escherichia coli O8 (strain IAI1).